Here is a 218-residue protein sequence, read N- to C-terminus: Octanoyltransferase (218 aa).

A BPL/LPL catalytic domain is found at 30-217; the sequence is GEAGELVWLV…SFARNFPPLA (188 aa). Residues 68 to 75, 148 to 150, and 161 to 163 contribute to the substrate site; these read RGGQYTYH, AIG, and GIA. C179 serves as the catalytic Acyl-thioester intermediate.

Belongs to the LipB family.

The protein localises to the cytoplasm. It catalyses the reaction octanoyl-[ACP] + L-lysyl-[protein] = N(6)-octanoyl-L-lysyl-[protein] + holo-[ACP] + H(+). The protein operates within protein modification; protein lipoylation via endogenous pathway; protein N(6)-(lipoyl)lysine from octanoyl-[acyl-carrier-protein]: step 1/2. Its function is as follows. Catalyzes the transfer of endogenously produced octanoic acid from octanoyl-acyl-carrier-protein onto the lipoyl domains of lipoate-dependent enzymes. Lipoyl-ACP can also act as a substrate although octanoyl-ACP is likely to be the physiological substrate. In Paracoccus denitrificans (strain Pd 1222), this protein is Octanoyltransferase.